Consider the following 27-residue polypeptide: C-reactive protein P1 (27 aa).

Residues 1–27 (IPQDLSGKMLTFPKEEDDDDVKLMTPK) form a disordered region. The region spanning 6-27 (SGKMLTFPKEEDDDDVKLMTPK) is the Pentraxin (PTX) domain.

Belongs to the pentraxin family. Homopentamer. Pentraxin (or pentaxin) have a discoid arrangement of 5 non-covalently bound subunits. Exists as a dimer under reducing conditions. Requires Ca(2+) as cofactor. Glycosylated.

The protein resides in the secreted. Displays several functions associated with host defense: it promotes agglutination, bacterial capsular swelling, phagocytosis, and complement fixation through its calcium-dependent binding to phosphorylcholine. This Gadus morhua (Atlantic cod) protein is C-reactive protein P1.